A 354-amino-acid polypeptide reads, in one-letter code: Methionine import ATP-binding protein MetN (354 aa).

Residues 8–250 enclose the ABC transporter domain; the sequence is LDHIDITFRQ…PKEALTQEFI (243 aa). 42–49 is a binding site for ATP; sequence GYSGAGKS.

It belongs to the ABC transporter superfamily. Methionine importer (TC 3.A.1.24) family. In terms of assembly, the complex is composed of two ATP-binding proteins (MetN), two transmembrane proteins (MetI) and a solute-binding protein (MetQ).

It localises to the cell membrane. The catalysed reaction is L-methionine(out) + ATP + H2O = L-methionine(in) + ADP + phosphate + H(+). The enzyme catalyses D-methionine(out) + ATP + H2O = D-methionine(in) + ADP + phosphate + H(+). Part of the ABC transporter complex MetNIQ involved in methionine import. Responsible for energy coupling to the transport system. This is Methionine import ATP-binding protein MetN from Streptococcus pyogenes serotype M1.